The chain runs to 715 residues: Dynein axonemal intermediate chain 7 (715 aa).

Residues 291–322 are disordered; the sequence is AVSKDLQEENKQENESNSVHEEETKAEGQGDV. Over residues 295–318 the composition is skewed to basic and acidic residues; sequence DLQEENKQENESNSVHEEETKAEG.

The protein belongs to the DNAI7 family. In terms of assembly, part of the multisubunit axonemal dynein complex formed at least of two heavy chains and a number of intermediate and light chains. Associates with tubulin. Interacts with microtubule. Ubiquitinated. Ubiquitination leads to its degradation through the 26S proteasome. Ubiquitin-proteasome-mediated DNAI7 degradation occurs in mitosis.

It is found in the cell projection. The protein resides in the cilium. It localises to the cytoplasm. Via its association with the multisubunit axonemal dynein complex, is potentially involved in the regulation of cilia function. May act as a cell cycle regulator. In Bos taurus (Bovine), this protein is Dynein axonemal intermediate chain 7.